The primary structure comprises 355 residues: MDDNKKRALAAALGQIERQFGKGAVMRMGDHERQAIPAISTGSLGLDIALGIGGLPKGRIVEIYGPESSGKTTLTLSVIAEAQKNGATCAFVDAEHALDPEYAGKLGVNVDDLLVSQPDTGEQALEITDMLVRSNAVDVIIVDSVAALVPKAEIEGEMGDMHVGLQARLMSQALRKITGNIKNANCLVIFINQIRMKIGVMFGSPETTTGGNALKFYASVRLDIRRTGAVKEGDEVVGSETRVKIVKNKVSPPFRQAEFQILYGKGIYRNGEIIDLGVAQGLVEKSGAWYSYQGNKIGQGKANAAKYLQENPAIGAEIEKQIREKLLTAGAVAAAAKAAAAEADADDMADADAGY.

ATP is bound at residue 65–72; sequence GPESSGKT.

It belongs to the RecA family.

The protein localises to the cytoplasm. Functionally, can catalyze the hydrolysis of ATP in the presence of single-stranded DNA, the ATP-dependent uptake of single-stranded DNA by duplex DNA, and the ATP-dependent hybridization of homologous single-stranded DNAs. It interacts with LexA causing its activation and leading to its autocatalytic cleavage. This chain is Protein RecA, found in Pseudomonas entomophila (strain L48).